Consider the following 333-residue polypeptide: 4-hydroxy-3-methylbut-2-enyl diphosphate reductase (333 aa).

Cys-34 is a binding site for [4Fe-4S] cluster. (2E)-4-hydroxy-3-methylbut-2-enyl diphosphate is bound by residues His-63 and His-96. Dimethylallyl diphosphate-binding residues include His-63 and His-96. Residues His-63 and His-96 each coordinate isopentenyl diphosphate. Cys-118 provides a ligand contact to [4Fe-4S] cluster. Position 146 (His-146) interacts with (2E)-4-hydroxy-3-methylbut-2-enyl diphosphate. Residue His-146 participates in dimethylallyl diphosphate binding. His-146 contacts isopentenyl diphosphate. The active-site Proton donor is the Glu-148. Thr-186 is a binding site for (2E)-4-hydroxy-3-methylbut-2-enyl diphosphate. Cys-216 lines the [4Fe-4S] cluster pocket. Ser-244, Ser-245, Asn-246, and Ser-289 together coordinate (2E)-4-hydroxy-3-methylbut-2-enyl diphosphate. Dimethylallyl diphosphate is bound by residues Ser-244, Ser-245, Asn-246, and Ser-289. Isopentenyl diphosphate-binding residues include Ser-244, Ser-245, Asn-246, and Ser-289.

This sequence belongs to the IspH family. [4Fe-4S] cluster serves as cofactor.

It carries out the reaction isopentenyl diphosphate + 2 oxidized [2Fe-2S]-[ferredoxin] + H2O = (2E)-4-hydroxy-3-methylbut-2-enyl diphosphate + 2 reduced [2Fe-2S]-[ferredoxin] + 2 H(+). It catalyses the reaction dimethylallyl diphosphate + 2 oxidized [2Fe-2S]-[ferredoxin] + H2O = (2E)-4-hydroxy-3-methylbut-2-enyl diphosphate + 2 reduced [2Fe-2S]-[ferredoxin] + 2 H(+). It functions in the pathway isoprenoid biosynthesis; dimethylallyl diphosphate biosynthesis; dimethylallyl diphosphate from (2E)-4-hydroxy-3-methylbutenyl diphosphate: step 1/1. Its pathway is isoprenoid biosynthesis; isopentenyl diphosphate biosynthesis via DXP pathway; isopentenyl diphosphate from 1-deoxy-D-xylulose 5-phosphate: step 6/6. Catalyzes the conversion of 1-hydroxy-2-methyl-2-(E)-butenyl 4-diphosphate (HMBPP) into a mixture of isopentenyl diphosphate (IPP) and dimethylallyl diphosphate (DMAPP). Acts in the terminal step of the DOXP/MEP pathway for isoprenoid precursor biosynthesis. In Mycobacterium sp. (strain JLS), this protein is 4-hydroxy-3-methylbut-2-enyl diphosphate reductase.